The following is a 249-amino-acid chain: tRNA (guanine-N(1)-)-methyltransferase (249 aa).

Residues Gly121 and 141–146 (LGDFVL) each bind S-adenosyl-L-methionine.

This sequence belongs to the RNA methyltransferase TrmD family. In terms of assembly, homodimer.

It is found in the cytoplasm. It carries out the reaction guanosine(37) in tRNA + S-adenosyl-L-methionine = N(1)-methylguanosine(37) in tRNA + S-adenosyl-L-homocysteine + H(+). Its function is as follows. Specifically methylates guanosine-37 in various tRNAs. The sequence is that of tRNA (guanine-N(1)-)-methyltransferase from Cereibacter sphaeroides (strain ATCC 17023 / DSM 158 / JCM 6121 / CCUG 31486 / LMG 2827 / NBRC 12203 / NCIMB 8253 / ATH 2.4.1.) (Rhodobacter sphaeroides).